A 135-amino-acid chain; its full sequence is S-adenosylmethionine decarboxylase proenzyme (135 aa).

Ser64 acts as the Schiff-base intermediate with substrate; via pyruvic acid in catalysis. Ser64 is modified (pyruvic acid (Ser); by autocatalysis). His69 acts as the Proton acceptor; for processing activity in catalysis. The Proton donor; for catalytic activity role is filled by Cys84.

It belongs to the prokaryotic AdoMetDC family. Type 1 subfamily. Heterotetramer of two alpha and two beta chains arranged as a dimer of alpha/beta heterodimers. It depends on pyruvate as a cofactor. Is synthesized initially as an inactive proenzyme. Formation of the active enzyme involves a self-maturation process in which the active site pyruvoyl group is generated from an internal serine residue via an autocatalytic post-translational modification. Two non-identical subunits are generated from the proenzyme in this reaction, and the pyruvate is formed at the N-terminus of the alpha chain, which is derived from the carboxyl end of the proenzyme. The post-translation cleavage follows an unusual pathway, termed non-hydrolytic serinolysis, in which the side chain hydroxyl group of the serine supplies its oxygen atom to form the C-terminus of the beta chain, while the remainder of the serine residue undergoes an oxidative deamination to produce ammonia and the pyruvoyl group blocking the N-terminus of the alpha chain.

The catalysed reaction is S-adenosyl-L-methionine + H(+) = S-adenosyl 3-(methylsulfanyl)propylamine + CO2. Its pathway is amine and polyamine biosynthesis; S-adenosylmethioninamine biosynthesis; S-adenosylmethioninamine from S-adenosyl-L-methionine: step 1/1. Catalyzes the decarboxylation of S-adenosylmethionine to S-adenosylmethioninamine (dcAdoMet), the propylamine donor required for the synthesis of the polyamines spermine and spermidine from the diamine putrescine. This Aquifex aeolicus (strain VF5) protein is S-adenosylmethionine decarboxylase proenzyme.